The primary structure comprises 491 residues: Equilibrative nucleobase transporter 1 (491 aa).

Residues 17 to 37 (LLECLGFAGVLFGWPSLVFVF) traverse the membrane as a helical segment. Asn56 carries an N-linked (GlcNAc...) asparagine glycan. Transmembrane regions (helical) follow at residues 72-92 (LIFT…GYIF), 102-122 (LIAI…SAGS), 123-143 (AVLL…FLIT), 156-176 (STII…FLII), and 188-208 (ASFI…FLLM). Asn220 and Asn229 each carry an N-linked (GlcNAc...) asparagine glycan. Ser253 is subject to Phosphoserine. Residue Thr258 is modified to Phosphothreonine. The next 6 helical transmembrane spans lie at 279 to 299 (FAWH…FIGT), 319 to 339 (TNAF…GLLM), 356 to 376 (STLA…SLLC), 396 to 418 (ILQV…LAFP), 427 to 447 (GLVM…FTLI), and 456 to 476 (FYVN…PFLV).

The protein belongs to the SLC43A transporter (TC 2.A.1.44) family. Widely expressed with highest levels in the liver and lung, followed by the pancreas. Highly expressed in macrophages.

It is found in the basolateral cell membrane. The enzyme catalyses adenine(out) = adenine(in). The catalysed reaction is guanine(out) = guanine(in). It catalyses the reaction hypoxanthine(out) = hypoxanthine(in). Its activity is regulated as follows. Adenine transport is strongly inhibited by decynium-22. 6-mercaptopurine-transport is inhibited by 6-thioguanine, 6-methylmercaptopurine and decynium-22. Its function is as follows. Sodium-independent purine-selective nucleobase transporter which mediates the equilibrative transport of extracellular purine nucleobases such as adenine, guanine and hypoxanthine. May regulate fatty acid (FA) transport in adipocytes, acting as a positive regulator of FA efflux and as a negative regulator of FA uptake. Functionally, sodium-independent purine-selective nucleobase transporter which mediates the equilibrative transport of extracellular purine nucleobase adenine. Mediates the influx and efflux of the purine nucleobase analog drug 6-mercaptopurine across the membrane. The sequence is that of Equilibrative nucleobase transporter 1 (SLC43A3) from Homo sapiens (Human).